Reading from the N-terminus, the 209-residue chain is Large ribosomal subunit protein uL3 (209 aa).

This sequence belongs to the universal ribosomal protein uL3 family. As to quaternary structure, part of the 50S ribosomal subunit. Forms a cluster with proteins L14 and L19.

One of the primary rRNA binding proteins, it binds directly near the 3'-end of the 23S rRNA, where it nucleates assembly of the 50S subunit. This is Large ribosomal subunit protein uL3 from Moorella thermoacetica (strain ATCC 39073 / JCM 9320).